Here is a 343-residue protein sequence, read N- to C-terminus: Dihydroorotate dehydrogenase (quinone) (343 aa).

FMN-binding positions include 65 to 69 (AGFDK) and threonine 89. Position 69 (lysine 69) interacts with substrate. 114-118 (NRMGF) lines the substrate pocket. FMN contacts are provided by asparagine 145 and asparagine 178. Position 178 (asparagine 178) interacts with substrate. Serine 181 (nucleophile) is an active-site residue. A substrate-binding site is contributed by asparagine 183. FMN contacts are provided by lysine 215 and threonine 243. 244–245 (NT) is a substrate binding site. Residues glycine 269, glycine 298, and 319–320 (YT) contribute to the FMN site.

Belongs to the dihydroorotate dehydrogenase family. Type 2 subfamily. Monomer. FMN serves as cofactor.

It is found in the cell membrane. It catalyses the reaction (S)-dihydroorotate + a quinone = orotate + a quinol. Its pathway is pyrimidine metabolism; UMP biosynthesis via de novo pathway; orotate from (S)-dihydroorotate (quinone route): step 1/1. Functionally, catalyzes the conversion of dihydroorotate to orotate with quinone as electron acceptor. This chain is Dihydroorotate dehydrogenase (quinone), found in Leifsonia xyli subsp. xyli (strain CTCB07).